The following is a 133-amino-acid chain: Peptide methionine sulfoxide reductase MsrB (133 aa).

The region spanning 8–130 (LDVWRELLSD…NSASLRLKPR (123 aa)) is the MsrB domain. Zn(2+) is bound by residues Cys47, Cys50, Cys96, and Cys99. Cys119 serves as the catalytic Nucleophile.

This sequence belongs to the MsrB Met sulfoxide reductase family. Requires Zn(2+) as cofactor.

It catalyses the reaction L-methionyl-[protein] + [thioredoxin]-disulfide + H2O = L-methionyl-(R)-S-oxide-[protein] + [thioredoxin]-dithiol. The protein is Peptide methionine sulfoxide reductase MsrB of Azotobacter vinelandii (strain DJ / ATCC BAA-1303).